Reading from the N-terminus, the 93-residue chain is MKFAVILLFSLVVLAVASESVEEVRREIDIEDLPEQQRGCADLRQPCTEGDDCSCCGREGVCNCSHPHKKGCYCKTAGPLEKLAKKFKGCKNK.

The first 18 residues, methionine 1–serine 18, serve as a signal peptide directing secretion. Residues glutamate 19–arginine 38 constitute a propeptide that is removed on maturation.

Belongs to the neurotoxin 31 family. In terms of processing, contains 5 disulfide bonds. Expressed by the venom gland.

It localises to the secreted. In Lycosa singoriensis (Wolf spider), this protein is U12-lycotoxin-Ls1c.